A 507-amino-acid polypeptide reads, in one-letter code: Extracellular elastase (507 aa).

A signal peptide spans 1-28 (MKNFSKFALTSIAALTVASPLVNTEVDA). Positions 29-207 (KDKVSATQNI…VVDKLNMIKE (179 aa)) are excised as a propeptide. Aspartate 347 lines the Ca(2+) pocket. Histidine 351 is a binding site for Zn(2+). Glutamate 352 is a catalytic residue. Histidine 355 and glutamate 375 together coordinate Zn(2+). Residues aspartate 386, glutamate 388, aspartate 389, leucine 391, glutamate 394, tyrosine 397, threonine 398, valine 401, and aspartate 404 each coordinate Ca(2+). Histidine 435 (proton donor) is an active-site residue.

This sequence belongs to the peptidase M4 family. It depends on Ca(2+) as a cofactor. Requires Zn(2+) as cofactor.

It localises to the secreted. Functionally, protease that has a low substrate specificity. Glucagon is preferentially cleaved between aromatic (Phe) and hydrophobic (Val) amino acids. Hydrolyzes casein and elastin. The protein is Extracellular elastase (sepA) of Staphylococcus epidermidis.